Here is a 449-residue protein sequence, read N- to C-terminus: C4-dicarboxylate transport protein (449 aa).

9 helical membrane passes run 5-25 (AVFK…VSLG), 45-65 (LIKM…IAGM), 77-97 (LAVL…LIVV), 149-169 (GDML…HSFG), 185-205 (VLFG…FGAM), 231-251 (CVIF…FSII), 298-318 (GYSF…VFIA), 332-352 (TLLV…GSGF), and 353-373 (IVLA…LALI).

The protein belongs to the dicarboxylate/amino acid:cation symporter (DAACS) (TC 2.A.23) family.

Its subcellular location is the cell inner membrane. Responsible for the transport of dicarboxylates such as succinate, fumarate, and malate from the periplasm across the membrane. In Dechloromonas aromatica (strain RCB), this protein is C4-dicarboxylate transport protein.